A 414-amino-acid polypeptide reads, in one-letter code: Thyroid hormone receptor beta-B (414 aa).

The segment at 1–59 (MPSSMSVRLFTASAAQRKKIQEGDCCVVLAGKTQGRFILIGAVARVSGYIPSYLDKDEL) is modulating. 2 consecutive NR C4-type zinc fingers follow at residues 60-80 (CVVC…CEGC) and 98-122 (CKYE…FKKC). Residues 60 to 134 (CVVCGDKATG…VGMATDLVLD (75 aa)) constitute a DNA-binding region (nuclear receptor). The region spanning 170 to 414 (EEWELIQVVT…PPLFLEVFED (245 aa)) is the NR LBD domain.

Belongs to the nuclear hormone receptor family. NR1 subfamily.

The protein resides in the nucleus. In terms of biological role, high affinity receptor for triiodothyronine (T3). The polypeptide is Thyroid hormone receptor beta-B (thrb-b) (Xenopus laevis (African clawed frog)).